The primary structure comprises 881 residues: Cell wall protein PRY3 (881 aa).

The N-terminal stretch at 1–18 (MLEFPISVLLGCLVAVKA) is a signal peptide. The region spanning 30-144 (LNEHNKFRAL…TWNNYIVCSY (115 aa)) is the SCP domain. Asn101 carries N-linked (GlcNAc...) asparagine glycosylation. The disordered stretch occupies residues 262–313 (VVSSDATSSTTTTSSVATSSSTTSSDPTSSTAAASSSDPASSSAAASSSAST). Asn360 is a glycosylation site (N-linked (GlcNAc...) asparagine). Disordered regions lie at residues 381-400 (AADD…VSEH) and 453-494 (VSST…NSAA). Residues 386–400 (QGSTSKEATSSVSEH) show a composition bias toward polar residues. Residues Asn488, Asn535, Asn547, and Asn569 are each glycosylated (N-linked (GlcNAc...) asparagine). Residues 579–611 (IDPTLDPTDNSASPTDNAKHTSTYGSSSTGASL) are disordered. Over residues 585-594 (PTDNSASPTD) the composition is skewed to polar residues. Residues 599 to 611 (TSTYGSSSTGASL) show a composition bias toward low complexity. A glycan (N-linked (GlcNAc...) asparagine) is linked at Asn625. 2 disordered regions span residues 758 to 788 (LASD…TTTT) and 800 to 830 (PSST…MHQP). 2 stretches are compositionally biased toward low complexity: residues 776–788 (STSN…TTTT) and 808–820 (RTTT…STTS). The segment covering 821-830 (QQDGSAMHQP) has biased composition (polar residues). Gly853 carries GPI-anchor amidated glycine lipidation. A propeptide spans 854 to 881 (AATPLSIFQCNSLAGTIAAFVVAVLFAF) (removed in mature form).

This sequence belongs to the CRISP family. Post-translationally, the GPI-anchor is attached to the protein in the endoplasmic reticulum and serves to target the protein to the cell surface. There, the glucosamine-inositol phospholipid moiety is cleaved off and the GPI-modified mannoprotein is covalently attached via its lipidless GPI glycan remnant to the 1,6-beta-glucan of the outer cell wall layer.

It is found in the secreted. Its subcellular location is the cell wall. The protein resides in the membrane. Its function is as follows. The full-length isoform (isoform Long) is a daughter cell-specific cell wall protein required for efficient export of lipids such as acetylated sterols. Acts in detoxification of hydrophobic compounds. Involved in tolerance to organic solvents such as dimethyl sulfoxide (DMSO). Also plays a role as an inhibitor of mating. STE12 is utilized as a repressor of full-length PRY3 transcription, ensuring efficient mating. In terms of biological role, there is no evidence that production of the short PRY3 transcript (isoform Short) is anything more than an adventitious by-product of the mechanism responsible for the repression of the full-length transcript. Moreover, no disadvantage is detectable for cells unable to make the short transcript. In Saccharomyces cerevisiae (strain ATCC 204508 / S288c) (Baker's yeast), this protein is Cell wall protein PRY3 (PRY3).